The primary structure comprises 182 residues: Glycerol-3-phosphate acyltransferase 1 (182 aa).

A run of 5 helical transmembrane segments spans residues 5-25 (MQFL…AYIV), 54-74 (GYFI…VSIA), 81-101 (STFV…PIVF), 117-137 (IAFD…FYLI), and 157-177 (ILYS…VLIL).

Belongs to the PlsY family. Probably interacts with PlsX.

It localises to the cell membrane. It carries out the reaction an acyl phosphate + sn-glycerol 3-phosphate = a 1-acyl-sn-glycero-3-phosphate + phosphate. The protein operates within lipid metabolism; phospholipid metabolism. Catalyzes the transfer of an acyl group from acyl-phosphate (acyl-PO(4)) to glycerol-3-phosphate (G3P) to form lysophosphatidic acid (LPA). This enzyme utilizes acyl-phosphate as fatty acyl donor, but not acyl-CoA or acyl-ACP. The protein is Glycerol-3-phosphate acyltransferase 1 of Bacillus cereus (strain ATCC 10987 / NRS 248).